The following is a 200-amino-acid chain: ATP synthase subunit delta', mitochondrial (200 aa).

Residues 1 to 21 constitute a mitochondrion transit peptide; it reads MFRHSSRLLARATTMGWRRPF.

Belongs to the ATPase epsilon chain family. As to quaternary structure, F-type ATPases have 2 components, CF(1) - the catalytic core - and CF(0) - the membrane proton channel. CF(1) has five subunits: alpha(3), beta(3), gamma(1), delta(1), epsilon(1). CF(0) has three main subunits: a, b and c.

It is found in the mitochondrion. Its subcellular location is the mitochondrion inner membrane. Mitochondrial membrane ATP synthase (F(1)F(0) ATP synthase or Complex V) produces ATP from ADP in the presence of a proton gradient across the membrane which is generated by electron transport complexes of the respiratory chain. F-type ATPases consist of two structural domains, F(1) - containing the extramembraneous catalytic core, and F(0) - containing the membrane proton channel, linked together by a central stalk and a peripheral stalk. During catalysis, ATP turnover in the catalytic domain of F(1) is coupled via a rotary mechanism of the central stalk subunits to proton translocation. Part of the complex F(1) domain and of the central stalk which is part of the complex rotary element. Rotation of the central stalk against the surrounding alpha(3)beta(3) subunits leads to hydrolysis of ATP in three separate catalytic sites on the beta subunits. This chain is ATP synthase subunit delta', mitochondrial, found in Ipomoea batatas (Sweet potato).